We begin with the raw amino-acid sequence, 332 residues long: MEQKYSLLSHNTFGIDVSAACFLEYASVDELRGLIGSGRVTSPYLHIGGGSNLLFTKDYEGTILHSRIGGVEVVAETDDDIVVRVGAGVVWDDFVDYCVQRHWYGVENLSLIPGEVGASAVQNIGAYGVEVKDLIVRVETLNIEGKEHVYDVTECGYSYRDSIFKRPENKSVFVTYVSFRLSKREHYTLDYGTIRRELEKYPGVTLDVVRRVIIAIREEKLPDPRVMGNAGSFFMNPIVGREQFEALQAEYPQMPFYEIDTDRVKIPAGWMIDQCGWKGKALGPAAVHDKQALVLVNRGGAKGADVIALSDAVRASVRAKFGIDIHPEVNFI.

The 170-residue stretch at 15–184 (IDVSAACFLE…TYVSFRLSKR (170 aa)) folds into the FAD-binding PCMH-type domain. The active site involves arginine 160. The Proton donor role is filled by serine 232. The active site involves glutamate 328.

This sequence belongs to the MurB family. The cofactor is FAD.

It is found in the cytoplasm. It catalyses the reaction UDP-N-acetyl-alpha-D-muramate + NADP(+) = UDP-N-acetyl-3-O-(1-carboxyvinyl)-alpha-D-glucosamine + NADPH + H(+). It participates in cell wall biogenesis; peptidoglycan biosynthesis. Its function is as follows. Cell wall formation. In Bacteroides fragilis (strain YCH46), this protein is UDP-N-acetylenolpyruvoylglucosamine reductase.